The sequence spans 695 residues: Polyribonucleotide nucleotidyltransferase (695 aa).

Mg(2+)-binding residues include Asp486 and Asp492. In terms of domain architecture, KH spans 553-612 (PRIETMQINTSKIATVIGPGGKQIRQIIERSGAQVDINDDGVINIAASTQESINKAKELI). The region spanning 622–690 (GKVYNGRVTS…EKGQLKLSHK (69 aa)) is the S1 motif domain.

It belongs to the polyribonucleotide nucleotidyltransferase family. Mg(2+) is required as a cofactor.

Its subcellular location is the cytoplasm. The catalysed reaction is RNA(n+1) + phosphate = RNA(n) + a ribonucleoside 5'-diphosphate. Its function is as follows. Involved in mRNA degradation. Catalyzes the phosphorolysis of single-stranded polyribonucleotides processively in the 3'- to 5'-direction. The sequence is that of Polyribonucleotide nucleotidyltransferase from Chlamydia trachomatis serovar L2 (strain ATCC VR-902B / DSM 19102 / 434/Bu).